Here is a 61-residue protein sequence, read N- to C-terminus: Large ribosomal subunit protein bL28 (61 aa).

Belongs to the bacterial ribosomal protein bL28 family.

This is Large ribosomal subunit protein bL28 from Geobacillus sp. (strain WCH70).